Here is a 358-residue protein sequence, read N- to C-terminus: DNA methyltransferase CcrM (358 aa).

Residues 1–260 (MKFGPETIIH…AKVVPIAPED (260 aa)) form a methyltransferase region. DNA-binding regions (target strand DNA) lie at residues 31–34 (DPPY) and 39–45 (GGDLLRP). 2 consecutive DNA-binding regions (non-target strand DNA) follow at residues 93–94 (YH) and 109–110 (WI). Residue H94 participates in dsDNA binding. The segment at residues 122–132 (MPNFKGTRFAN) is a DNA-binding region (target strand DNA). The segment at residues 153-157 (YDALK) is a DNA-binding region (non-target strand DNA). Positions 164 and 179 each coordinate dsDNA. Residues 187–193 (KAHPTQK) constitute a DNA-binding region (target strand DNA). One can recognise an RAMA domain in the interval 259–355 (EDLDVMGSKR…IDVLRAQVRA (97 aa)). Residues 261–270 (LDVMGSKRAE) form a linker region. K267 and R272 together coordinate dsDNA. Positions 272–358 (RVPFGTIVEA…LRAQVRAGMN (87 aa)) are non-specific DNA-binding. 2 DNA-binding regions (non-target strand DNA) span residues 315-317 (SIH) and 330-332 (NGW). R350 is a dsDNA binding site.

This sequence belongs to the N(4)/N(6)-methyltransferase family. Homodimer. Rapidly degraded by Lon protease prior to cell division.

The catalysed reaction is a 2'-deoxyadenosine in DNA + S-adenosyl-L-methionine = an N(6)-methyl-2'-deoxyadenosine in DNA + S-adenosyl-L-homocysteine + H(+). In terms of biological role, a beta subtype methylase that recognizes the double-stranded sequence 5'-GANTC-3' and methylates non-modifed A-2 on the hemimethylated, post-replicative DNA. Opens a bubble in the DNA at the recognition site, allowing precise recognition of the sequence and ensuring enzyme specificity. Functions only in the predivisional cell. Responsible for 5'-GANTC-3' methylation in the cell; methylation of hemimethylated sites generated after replication fork passage occurs late in the predivisional cell, near completion of chromosome replication but prior to cell division. Contributes to the accurate cell-cycle control of DNA replication and cellular morphology. This chain is DNA methyltransferase CcrM (ccrMIM), found in Caulobacter vibrioides (strain ATCC 19089 / CIP 103742 / CB 15) (Caulobacter crescentus).